A 521-amino-acid chain; its full sequence is Probable rhamnogalacturonase B (521 aa).

An N-terminal signal peptide occupies residues methionine 1–alanine 21. Residues cysteine 42 and cysteine 68 are joined by a disulfide bond. N-linked (GlcNAc...) asparagine glycosylation is present at asparagine 145. Aspartate 219 (proton donor) is an active-site residue. A disulfide bridge links cysteine 221 with cysteine 238. N-linked (GlcNAc...) asparagine glycosylation is present at asparagine 239. The active site involves histidine 294. An N-linked (GlcNAc...) asparagine glycan is attached at asparagine 321. Cystine bridges form between cysteine 344/cysteine 350 and cysteine 372/cysteine 381. The disordered stretch occupies residues glutamate 462–isoleucine 521. Positions arginine 469 to proline 486 are enriched in polar residues. A compositionally biased stretch (basic residues) spans proline 507–isoleucine 521.

The protein belongs to the glycosyl hydrolase 28 family.

The protein localises to the secreted. The enzyme catalyses Endohydrolysis of alpha-D-GalA-(1-&gt;2)-alpha-L-Rha glycosidic bond in the rhamnogalacturonan I backbone with initial inversion of anomeric configuration releasing oligosaccharides with beta-D-GalA at the reducing end.. Its function is as follows. Pectinolytic enzymes consist of four classes of enzymes: pectine lyase, polygalacturonase, pectin methylesterase and rhamnogalacturonase. Hydrolyzes alpha-D-galacturonopyranosyl-(1,2)-alpha-L-rhamnopyranosyl linkages in the backbone of the hairy regions of pectins. The sequence is that of Probable rhamnogalacturonase B (rhgB) from Aspergillus fumigatus (strain ATCC MYA-4609 / CBS 101355 / FGSC A1100 / Af293) (Neosartorya fumigata).